Here is a 264-residue protein sequence, read N- to C-terminus: Secretory carrier-associated membrane protein 4 (264 aa).

The interval 1–33 (MNRHHDPNPFDEDEEIVNPFSKGGGRVPAASRP) is disordered. Topologically, residues 1-122 (MNRHHDPNPF…AQKLQYLAFA (122 aa)) are cytoplasmic. Residues 51 to 85 (MNDSSQKQRKLADWEAELRKKEMDIKRREEAIAKF) adopt a coiled-coil conformation. Transmembrane regions (helical) follow at residues 123–143 (SWLG…VCWI), 150–170 (IFFL…VLWY), 185–205 (FGWF…AAIA), and 233–253 (IFYF…LWVL). The Cytoplasmic segment spans residues 254–264 (QKIYLYFRGNK).

It belongs to the SCAMP family.

The protein resides in the cell membrane. It localises to the cytoplasmic vesicle. Its subcellular location is the secretory vesicle membrane. Functionally, probably involved in membrane trafficking. This is Secretory carrier-associated membrane protein 4 (SCAMP4) from Arabidopsis thaliana (Mouse-ear cress).